A 474-amino-acid chain; its full sequence is Gamma-aminobutyric acid receptor subunit beta-1 (474 aa).

An N-terminal signal peptide occupies residues 1–25 (MWTVQNRESLGLLSFPVMVAMVCCA). Residues 26–245 (HSSNEPSNMS…SFRLKRNIGY (220 aa)) are Extracellular-facing. 2 N-linked (GlcNAc...) asparagine glycosylation sites follow: asparagine 33 and asparagine 105. Position 122 (tyrosine 122) interacts with histamine. Cysteine 161 and cysteine 175 are disulfide-bonded. The N-linked (GlcNAc...) asparagine glycan is linked to asparagine 174. Histamine-binding positions include 181 to 182 (SY) and threonine 227. Tyrosine 182 and threonine 227 together coordinate 4-aminobutanoate. The next 3 helical transmembrane spans lie at 246 to 267 (FILQTYMPSTLITILSWVSFWI), 271 to 293 (ASAARVALGITTVLTMTTISTHL), and 305 to 327 (AIDIYLMGCFVFVFLALLEYAFV). The Cytoplasmic portion of the chain corresponds to 328–451 (NYIFFGKGPQ…DLTDVNSIDK (124 aa)). A helical membrane pass occupies residues 452 to 473 (WSRMFFPITFSLFNVVYWLYYV).

Belongs to the ligand-gated ion channel (TC 1.A.9) family. Gamma-aminobutyric acid receptor (TC 1.A.9.5) subfamily. GABRB1 sub-subfamily. Heteropentamer, formed by a combination of alpha (GABRA1-6), beta (GABRB1-3), gamma (GABRG1-3), delta (GABRD), epsilon (GABRE), rho (GABRR1-3), pi (GABRP) and theta (GABRQ) chains, each subunit exhibiting distinct physiological and pharmacological properties. Binds UBQLN1.

It is found in the postsynaptic cell membrane. It localises to the cell membrane. The enzyme catalyses chloride(in) = chloride(out). With respect to regulation, potentiated by histamine. Its function is as follows. Beta subunit of the heteropentameric ligand-gated chloride channel gated by gamma-aminobutyric acid (GABA), a major inhibitory neurotransmitter in the brain. GABA-gated chloride channels, also named GABA(A) receptors (GABAAR), consist of five subunits arranged around a central pore and contain GABA active binding site(s) located at the alpha and beta subunit interface(s). When activated by GABA, GABAARs selectively allow the flow of chloride anions across the cell membrane down their electrochemical gradient. Chloride influx into the postsynaptic neuron following GABAAR opening decreases the neuron ability to generate a new action potential, thereby reducing nerve transmission. Beta-containing GABAARs can simultaneously bind GABA and histamine where histamine binds at the interface of two neighboring beta subunits, which may be involved in the regulation of sleep and wakefulness. This Mus musculus (Mouse) protein is Gamma-aminobutyric acid receptor subunit beta-1.